An 86-amino-acid polypeptide reads, in one-letter code: Co-chaperonin GroES (86 aa).

It belongs to the GroES chaperonin family. Heptamer of 7 subunits arranged in a ring. Interacts with the chaperonin GroEL.

It localises to the cytoplasm. Functionally, together with the chaperonin GroEL, plays an essential role in assisting protein folding. The GroEL-GroES system forms a nano-cage that allows encapsulation of the non-native substrate proteins and provides a physical environment optimized to promote and accelerate protein folding. GroES binds to the apical surface of the GroEL ring, thereby capping the opening of the GroEL channel. The sequence is that of Co-chaperonin GroES from Campylobacter jejuni subsp. doylei (strain ATCC BAA-1458 / RM4099 / 269.97).